The chain runs to 476 residues: Beta-amyrin 28-monooxygenase (476 aa).

A helical transmembrane segment spans residues 2–22 (ELLYVCLVCVFVFLVSLLLLY). Position 421 (cysteine 421) interacts with heme.

This sequence belongs to the cytochrome P450 family. Requires heme as cofactor. In terms of tissue distribution, specifically expressed in roots.

The protein resides in the membrane. The enzyme catalyses beta-amyrin + 3 reduced [NADPH--hemoprotein reductase] + 3 O2 = oleanolate + 3 oxidized [NADPH--hemoprotein reductase] + 4 H2O + 4 H(+). Its function is as follows. Catalyzes the carboxylation of beta-amyrin at the C-28 position to form oleanolate. Catalyzes the carboxylation of alpha-amyrin at the C-28 position to form ursolate. The chain is Beta-amyrin 28-monooxygenase (CYP716A44) from Solanum lycopersicum (Tomato).